The sequence spans 205 residues: Urease accessory protein UreE (205 aa).

The segment covering 171 to 192 (HHGHSHSHDHDHDHDHDHDHQH) has biased composition (basic and acidic residues). Residues 171–205 (HHGHSHSHDHDHDHDHDHDHQHGPCCSHGHHHGHR) form a disordered region.

Belongs to the UreE family.

The protein resides in the cytoplasm. Its function is as follows. Involved in urease metallocenter assembly. Binds nickel. Probably functions as a nickel donor during metallocenter assembly. In Burkholderia pseudomallei (strain K96243), this protein is Urease accessory protein UreE.